The following is a 356-amino-acid chain: Carbamoyl phosphate synthase small chain (356 aa).

The interval methionine 1–isoleucine 160 is CPSase. Serine 45, glycine 211, and glycine 213 together coordinate L-glutamine. The 188-residue stretch at lysine 163 to arginine 350 folds into the Glutamine amidotransferase type-1 domain. Cysteine 238 serves as the catalytic Nucleophile. 5 residues coordinate L-glutamine: leucine 239, glutamine 242, asparagine 280, glycine 282, and tyrosine 283. Residues histidine 323 and glutamate 325 contribute to the active site.

This sequence belongs to the CarA family. In terms of assembly, composed of two chains; the small (or glutamine) chain promotes the hydrolysis of glutamine to ammonia, which is used by the large (or ammonia) chain to synthesize carbamoyl phosphate. Tetramer of heterodimers (alpha,beta)4.

The enzyme catalyses hydrogencarbonate + L-glutamine + 2 ATP + H2O = carbamoyl phosphate + L-glutamate + 2 ADP + phosphate + 2 H(+). The catalysed reaction is L-glutamine + H2O = L-glutamate + NH4(+). The protein operates within amino-acid biosynthesis; L-arginine biosynthesis; carbamoyl phosphate from bicarbonate: step 1/1. Its pathway is pyrimidine metabolism; UMP biosynthesis via de novo pathway; (S)-dihydroorotate from bicarbonate: step 1/3. Its function is as follows. Small subunit of the glutamine-dependent carbamoyl phosphate synthetase (CPSase). CPSase catalyzes the formation of carbamoyl phosphate from the ammonia moiety of glutamine, carbonate, and phosphate donated by ATP, constituting the first step of 2 biosynthetic pathways, one leading to arginine and/or urea and the other to pyrimidine nucleotides. The small subunit (glutamine amidotransferase) binds and cleaves glutamine to supply the large subunit with the substrate ammonia. The chain is Carbamoyl phosphate synthase small chain from Caldanaerobacter subterraneus subsp. tengcongensis (strain DSM 15242 / JCM 11007 / NBRC 100824 / MB4) (Thermoanaerobacter tengcongensis).